A 101-amino-acid polypeptide reads, in one-letter code: MAKVSAVEKNKRREMMAKRYAARRARLKAIVMDQKVSLEERFKASIQLAELPRNSARVRVRNRCEVTGRPRAYYRKLQMSRIALRELGSLGHIPGVVKSSW.

This sequence belongs to the universal ribosomal protein uS14 family. As to quaternary structure, part of the 30S ribosomal subunit. Contacts proteins S3 and S10.

Binds 16S rRNA, required for the assembly of 30S particles and may also be responsible for determining the conformation of the 16S rRNA at the A site. This is Small ribosomal subunit protein uS14 from Bartonella bacilliformis (strain ATCC 35685 / KC583 / Herrer 020/F12,63).